The chain runs to 166 residues: Phosphopantetheine adenylyltransferase (166 aa).

S8 provides a ligand contact to substrate. Residues 8 to 9 (SF) and H16 each bind ATP. Residues K40, T72, and R86 each contribute to the substrate site. ATP-binding positions include 87–89 (GLR), E97, and 122–128 (YSFLSSS).

It belongs to the bacterial CoaD family. Homohexamer. Requires Mg(2+) as cofactor.

It is found in the cytoplasm. The catalysed reaction is (R)-4'-phosphopantetheine + ATP + H(+) = 3'-dephospho-CoA + diphosphate. It functions in the pathway cofactor biosynthesis; coenzyme A biosynthesis; CoA from (R)-pantothenate: step 4/5. Reversibly transfers an adenylyl group from ATP to 4'-phosphopantetheine, yielding dephospho-CoA (dPCoA) and pyrophosphate. The sequence is that of Phosphopantetheine adenylyltransferase from Synechococcus elongatus (strain ATCC 33912 / PCC 7942 / FACHB-805) (Anacystis nidulans R2).